The following is a 330-amino-acid chain: Phosphate acyltransferase (330 aa).

It belongs to the PlsX family. In terms of assembly, homodimer. Probably interacts with PlsY.

It localises to the cytoplasm. It carries out the reaction a fatty acyl-[ACP] + phosphate = an acyl phosphate + holo-[ACP]. It functions in the pathway lipid metabolism; phospholipid metabolism. Its function is as follows. Catalyzes the reversible formation of acyl-phosphate (acyl-PO(4)) from acyl-[acyl-carrier-protein] (acyl-ACP). This enzyme utilizes acyl-ACP as fatty acyl donor, but not acyl-CoA. The chain is Phosphate acyltransferase from Streptococcus pneumoniae (strain JJA).